The chain runs to 205 residues: TATA-box-binding protein (205 aa).

Repeat copies occupy residues 27–103 (LQNI…ARII) and 117–194 (IQNI…YPVL).

This sequence belongs to the TBP family. Belongs to the TFIID complex together with the TBP-associated factors (TAFs). Binds DNA as monomer.

Its subcellular location is the nucleus. General transcription factor that functions at the core of the DNA-binding multiprotein factor TFIID. Binding of TFIID to the TATA box is the initial transcriptional step of the pre-initiation complex (PIC), playing a role in the activation of eukaryotic genes transcribed by RNA polymerase II. The polypeptide is TATA-box-binding protein (tbpA) (Dictyostelium discoideum (Social amoeba)).